The primary structure comprises 72 residues: Heat-stable enterotoxin A2 (72 aa).

Positions 1–19 are cleaved as a signal peptide; that stretch reads MKKSILFIFLSVLSFSPFA. Residues 20–53 constitute a propeptide that is removed on maturation; sequence QDAKPAGSSKEKITLESKKCNIVKKNNESSPESM. 3 cysteine pairs are disulfide-bonded: C59–C64, C60–C68, and C63–C71.

This sequence belongs to the heat-stable enterotoxin family.

Its subcellular location is the secreted. Functionally, toxin which activates the particulate form of guanylate cyclase and increases cyclic GMP levels within the host intestinal epithelial cells. This Escherichia coli protein is Heat-stable enterotoxin A2 (sta2).